Consider the following 154-residue polypeptide: SsrA-binding protein (154 aa).

This sequence belongs to the SmpB family.

It is found in the cytoplasm. Functionally, required for rescue of stalled ribosomes mediated by trans-translation. Binds to transfer-messenger RNA (tmRNA), required for stable association of tmRNA with ribosomes. tmRNA and SmpB together mimic tRNA shape, replacing the anticodon stem-loop with SmpB. tmRNA is encoded by the ssrA gene; the 2 termini fold to resemble tRNA(Ala) and it encodes a 'tag peptide', a short internal open reading frame. During trans-translation Ala-aminoacylated tmRNA acts like a tRNA, entering the A-site of stalled ribosomes, displacing the stalled mRNA. The ribosome then switches to translate the ORF on the tmRNA; the nascent peptide is terminated with the 'tag peptide' encoded by the tmRNA and targeted for degradation. The ribosome is freed to recommence translation, which seems to be the essential function of trans-translation. The chain is SsrA-binding protein from Streptococcus thermophilus (strain CNRZ 1066).